The following is a 134-amino-acid chain: Large ribosomal subunit protein bL17 (134 aa).

It belongs to the bacterial ribosomal protein bL17 family. Part of the 50S ribosomal subunit. Contacts protein L32.

In Paracidovorax citrulli (strain AAC00-1) (Acidovorax citrulli), this protein is Large ribosomal subunit protein bL17.